The chain runs to 328 residues: Malate dehydrogenase (328 aa).

11-17 (GAAGQIG) lines the NAD(+) pocket. Positions 94 and 100 each coordinate substrate. Residues Asn107, Gln114, and 131-133 (VGN) each bind NAD(+). 2 residues coordinate substrate: Asn133 and Arg164. Catalysis depends on His189, which acts as the Proton acceptor.

Belongs to the LDH/MDH superfamily. MDH type 2 family.

The enzyme catalyses (S)-malate + NAD(+) = oxaloacetate + NADH + H(+). Its function is as follows. Catalyzes the reversible oxidation of malate to oxaloacetate. This is Malate dehydrogenase from Stenotrophomonas maltophilia (strain R551-3).